A 37-amino-acid polypeptide reads, in one-letter code: Mastoparan-VT (37 aa).

Residues 1–22 constitute a propeptide that is removed on maturation; that stretch reads EALADPIADPVAGPNPEADPEA. 4 AXPX repeats span residues 4-7, 8-11, 12-15, and 18-21; these read ADPI, ADPV, AGPN, and ADPE. At Leu36 the chain carries Leucine amide.

It belongs to the MCD family. Mastoparan subfamily. Expressed by the venom gland.

Its subcellular location is the secreted. It is found in the target cell membrane. Antimicrobial peptide with potent activity against both Gram-positive (S.aureus MIC=50 ug/ml, and B.subtilis MIC=25 ug/ml) and Gram-negative bacteria (P.aeruginosa MIC=25 ug/ml, E.coli MIC=3-50 ug/ml, K.pneumoniae MIC=25 ug/ml). Exhibits little hemolytic activity on human erythrocytes. The chain is Mastoparan-VT from Vespa tropica (Greater banded hornet).